The sequence spans 277 residues: Bifunctional protein FolD (277 aa).

NADP(+) contacts are provided by residues 159–161 (GRS), S184, and I225.

Belongs to the tetrahydrofolate dehydrogenase/cyclohydrolase family. In terms of assembly, homodimer.

The enzyme catalyses (6R)-5,10-methylene-5,6,7,8-tetrahydrofolate + NADP(+) = (6R)-5,10-methenyltetrahydrofolate + NADPH. It carries out the reaction (6R)-5,10-methenyltetrahydrofolate + H2O = (6R)-10-formyltetrahydrofolate + H(+). The protein operates within one-carbon metabolism; tetrahydrofolate interconversion. Functionally, catalyzes the oxidation of 5,10-methylenetetrahydrofolate to 5,10-methenyltetrahydrofolate and then the hydrolysis of 5,10-methenyltetrahydrofolate to 10-formyltetrahydrofolate. The chain is Bifunctional protein FolD from Acholeplasma laidlawii (strain PG-8A).